We begin with the raw amino-acid sequence, 262 residues long: Glutamate 5-kinase (262 aa).

Residue K14 coordinates ATP. Residues S54, D141, and N153 each contribute to the substrate site. Residues 173–174 (SD) and 214–220 (TGGMVTK) each bind ATP.

It belongs to the glutamate 5-kinase family.

The protein resides in the cytoplasm. The enzyme catalyses L-glutamate + ATP = L-glutamyl 5-phosphate + ADP. Its pathway is amino-acid biosynthesis; L-proline biosynthesis; L-glutamate 5-semialdehyde from L-glutamate: step 1/2. In terms of biological role, catalyzes the transfer of a phosphate group to glutamate to form L-glutamate 5-phosphate. The polypeptide is Glutamate 5-kinase (Symbiobacterium thermophilum (strain DSM 24528 / JCM 14929 / IAM 14863 / T)).